Consider the following 156-residue polypeptide: Small ribosomal subunit protein uS7 (156 aa).

The protein belongs to the universal ribosomal protein uS7 family. In terms of assembly, part of the 30S ribosomal subunit. Contacts proteins S9 and S11.

One of the primary rRNA binding proteins, it binds directly to 16S rRNA where it nucleates assembly of the head domain of the 30S subunit. Is located at the subunit interface close to the decoding center, probably blocks exit of the E-site tRNA. This chain is Small ribosomal subunit protein uS7, found in Pelagibacter ubique (strain HTCC1062).